Here is a 472-residue protein sequence, read N- to C-terminus: Selenium-binding protein 2 (472 aa).

A Phosphoserine modification is found at Ser-467.

This sequence belongs to the selenium-binding protein family. The N-terminus is blocked. Mainly expressed in liver.

It is found in the nucleus. It localises to the cytoplasm. The protein localises to the cytosol. Its subcellular location is the membrane. Selenium- and acetaminophen-binding protein which may be involved in the sensing of reactive xenobiotics in the cytoplasm. May be involved in intra-Golgi protein transport. The sequence is that of Selenium-binding protein 2 (Selenbp2) from Mus musculus (Mouse).